We begin with the raw amino-acid sequence, 154 residues long: Transcriptional repressor NrdR (154 aa).

The disordered stretch occupies residues 1-22; the sequence is MECPNCHKNASRVIDSRPSDEN. The segment at 3–34 is a zinc-finger region; that stretch reads CPNCHKNASRVIDSRPSDENRAIRRRRECENC. The region spanning 49-139 is the ATP-cone domain; that stretch reads LLVIKNDGTR…IYRQFKDVSG (91 aa).

This sequence belongs to the NrdR family. The cofactor is Zn(2+).

Functionally, negatively regulates transcription of bacterial ribonucleotide reductase nrd genes and operons by binding to NrdR-boxes. In Lactobacillus gasseri (strain ATCC 33323 / DSM 20243 / BCRC 14619 / CIP 102991 / JCM 1131 / KCTC 3163 / NCIMB 11718 / NCTC 13722 / AM63), this protein is Transcriptional repressor NrdR.